A 39-amino-acid chain; its full sequence is Photosystem II reaction center protein L (39 aa).

A helical transmembrane segment spans residues 18–38; the sequence is SLYLGLLSVFVLGILFSSYFF.

Belongs to the PsbL family. PSII is composed of 1 copy each of membrane proteins PsbA, PsbB, PsbC, PsbD, PsbE, PsbF, PsbH, PsbI, PsbJ, PsbK, PsbL, PsbM, PsbT, PsbX, PsbY, Psb30/Ycf12, peripheral proteins PsbO, CyanoQ (PsbQ), PsbU, PsbV and a large number of cofactors. It forms dimeric complexes.

It localises to the cellular thylakoid membrane. In terms of biological role, one of the components of the core complex of photosystem II (PSII). PSII is a light-driven water:plastoquinone oxidoreductase that uses light energy to abstract electrons from H(2)O, generating O(2) and a proton gradient subsequently used for ATP formation. It consists of a core antenna complex that captures photons, and an electron transfer chain that converts photonic excitation into a charge separation. This subunit is found at the monomer-monomer interface and is required for correct PSII assembly and/or dimerization. The polypeptide is Photosystem II reaction center protein L (Prochlorococcus marinus (strain MIT 9301)).